Consider the following 380-residue polypeptide: MLIVADENIPLLDAFFAGFGEIRRVPGRSIDRATVEQADVLLVRSVTNVNRALLEGSKVRFVGTCTIGTDHLDLDYFNEAGITWSSAPGCNARGVVDYVLGSLMTLAEIEGVDLRERTYGVIGAGEVGGRLIKVLKGLGWNVKVCDPPRQAAEGGDYVSLEQIIAQCDVISLHTPLTRSGDGATWHLFDEQRLQQLKPGAWLINAARGPVVDNTALREVLLEREDLQAVLDVWEAEPQVDVSLAELCVLATPHIAGYSLDGKQRGTAQIYQAYCDFIGEPASIQLGDLLPAPWLSEVSLHADSDPAWALAMLCRGVYDPRRDDADFRRTLLGSVGEQRAAFDVLRKQYPSRREIEGLKVRIEGDSPALRQIVAALGAVAV.

Substrate is bound by residues S45 and T66. 2 residues coordinate NAD(+): D146 and T174. R207 is a catalytic residue. D231 provides a ligand contact to NAD(+). E236 is an active-site residue. H253 acts as the Proton donor in catalysis. NAD(+) is bound at residue G256. Substrate is bound at residue Y257.

Belongs to the D-isomer specific 2-hydroxyacid dehydrogenase family. PdxB subfamily. Homodimer.

It localises to the cytoplasm. It catalyses the reaction 4-phospho-D-erythronate + NAD(+) = (R)-3-hydroxy-2-oxo-4-phosphooxybutanoate + NADH + H(+). The protein operates within cofactor biosynthesis; pyridoxine 5'-phosphate biosynthesis; pyridoxine 5'-phosphate from D-erythrose 4-phosphate: step 2/5. In terms of biological role, catalyzes the oxidation of erythronate-4-phosphate to 3-hydroxy-2-oxo-4-phosphonooxybutanoate. The polypeptide is Erythronate-4-phosphate dehydrogenase (Pseudomonas fluorescens (strain Pf0-1)).